The sequence spans 71 residues: Large ribosomal subunit protein uL29 (71 aa).

This sequence belongs to the universal ribosomal protein uL29 family.

The protein is Large ribosomal subunit protein uL29 of Rickettsia canadensis (strain McKiel).